The primary structure comprises 382 residues: Pyrimidine monooxygenase RutA (382 aa).

FMN is bound by residues 68–69 (IK), Asn134, Glu143, 159–160 (RY), and Ser209.

It belongs to the NtaA/SnaA/DszA monooxygenase family. RutA subfamily.

The enzyme catalyses uracil + FMNH2 + NADH + O2 = (Z)-3-ureidoacrylate + FMN + NAD(+) + H2O + H(+). It carries out the reaction thymine + FMNH2 + NADH + O2 = (Z)-2-methylureidoacrylate + FMN + NAD(+) + H2O + H(+). In terms of biological role, catalyzes the pyrimidine ring opening between N-3 and C-4 by an unusual flavin hydroperoxide-catalyzed mechanism, adding oxygen atoms in the process to yield ureidoacrylate peracid, that immediately reacts with FMN forming ureidoacrylate and FMN-N(5)-oxide. The FMN-N(5)-oxide reacts spontaneously with NADH to produce FMN. Requires the flavin reductase RutF to regenerate FMN in vivo. The chain is Pyrimidine monooxygenase RutA from Shigella flexneri serotype X (strain 2002017).